We begin with the raw amino-acid sequence, 181 residues long: Large ribosomal subunit protein uL16 (181 aa).

It belongs to the universal ribosomal protein uL16 family. As to quaternary structure, part of the 50S ribosomal subunit.

This Pyrococcus furiosus (strain ATCC 43587 / DSM 3638 / JCM 8422 / Vc1) protein is Large ribosomal subunit protein uL16.